The chain runs to 135 residues: IYYVLNSSPRYEPIYYQHRLAVLINNQHMPYQYYARPAAVRPHVQIPQWQVLPNIYPSTVVRHPRPHPSFIAIPPKXLQEKTVIPKINTIATVEPTPIPTPEPTVNNAVIPDASSEFIIASTPETTTVPVTSPVV.

O-linked (GalNAc...) threonine glycosylation occurs at threonine 96. A Phosphoserine; alternate modification is found at serine 114. Serine 114 is a glycosylation site (O-linked (GalNAc...) serine; alternate). Threonine 131 carries O-linked (GalNAc...) threonine glycosylation. The residue at position 132 (serine 132) is a Phosphoserine.

This sequence belongs to the kappa-casein family. As to expression, mammary gland specific. Secreted in milk.

The protein resides in the secreted. Its function is as follows. Kappa-casein stabilizes micelle formation, preventing casein precipitation in milk. The polypeptide is Kappa-casein (CSN3) (Equus grevyi (Grevy's zebra)).